The sequence spans 251 residues: Mediator of RNA polymerase II transcription subunit 7 (251 aa).

The tract at residues Met-1–His-38 is disordered. Residues Ala-22–Ser-32 are compositionally biased toward polar residues.

This sequence belongs to the Mediator complex subunit 7 family. As to quaternary structure, component of the Mediator complex. Interacts with mdt-10 and mdt-21. Interacts with RNA polymerase II.

The protein localises to the nucleus. Component of the Mediator complex, a coactivator involved in the regulated transcription of nearly all RNA polymerase II-dependent genes. Mediator functions as a bridge to convey information from gene-specific regulatory proteins to the basal RNA polymerase II transcription machinery. Mediator is recruited to promoters by direct interactions with regulatory proteins and serves as a scaffold for the assembly of a functional preinitiation complex with RNA polymerase II and the general transcription factors. Required for germ cell development and gonadal growth. In Caenorhabditis elegans, this protein is Mediator of RNA polymerase II transcription subunit 7 (let-49).